The following is a 352-amino-acid chain: C-C chemokine receptor type 5 (352 aa).

The Extracellular portion of the chain corresponds to Met1–Ala30. Tyr3 bears the Sulfotyrosine mark. Residues Ser6 and Ser7 are each glycosylated (O-linked (GalNAc...) serine). Tyr10 and Tyr14 each carry sulfotyrosine. 2 disulfides stabilise this stretch: Cys20–Cys269 and Cys101–Cys178. Residues His31–Cys58 form a helical membrane-spanning segment. Residues Lys59–Tyr68 lie on the Cytoplasmic side of the membrane. The chain crosses the membrane as a helical span at residues Leu69 to Tyr89. Residues Ala90 to Gln102 lie on the Extracellular side of the membrane. The helical transmembrane segment at Phe103–Ile124 threads the bilayer. The Cytoplasmic portion of the chain corresponds to Asp125–Thr141. The helical transmembrane segment at Val142 to Phe166 threads the bilayer. The Extracellular segment spans residues Thr167–Met198. The chain crosses the membrane as a helical span at residues Val199–Leu218. Topologically, residues Lys219 to Arg235 are cytoplasmic. The helical transmembrane segment at Leu236–Tyr260 threads the bilayer. Residues Gln261–Gln277 lie on the Extracellular side of the membrane. A helical transmembrane segment spans residues Ala278 to Gly301. Over Glu302–Leu352 the chain is Cytoplasmic. Residues Cys321, Cys323, and Cys324 are each lipidated (S-palmitoyl cysteine). Phosphoserine; by BARK1 occurs at positions 337, 342, and 349.

It belongs to the G-protein coupled receptor 1 family. As to quaternary structure, interacts with PRAF2. Efficient ligand binding to CCL3/MIP-1alpha and CCL4/MIP-1beta requires sulfation, O-glycosylation and sialic acid modifications. Glycosylation on Ser-6 is required for efficient binding of CCL4. Interacts with GRK2. Interacts with ARRB1 and ARRB2. Interacts with CNIH4. Interacts with S100A4; this interaction stimulates T-lymphocyte chemotaxis. Post-translationally, sulfated on at least 2 of the N-terminal tyrosines. Sulfation is required for efficient binding of the chemokines, CCL3 and CCL4. In terms of processing, palmitoylation in the C-terminal is important for cell surface expression. Phosphorylation on serine residues in the C-terminal is stimulated by binding CC chemokines especially by APO-RANTES. Post-translationally, O-glycosylated, but not N-glycosylated. Ser-6 appears to be the major site even if Ser-7 may be also O-glycosylated. Also sialylated glycans present which contribute to chemokine binding. Ser-17 may also be glycosylated and, if so, with small moieties such as a T-antigen.

The protein localises to the cell membrane. Its function is as follows. Receptor for a number of inflammatory CC-chemokines including CCL3/MIP-1-alpha, CCL4/MIP-1-beta and RANTES and subsequently transduces a signal by increasing the intracellular calcium ion level. May play a role in the control of granulocytic lineage proliferation or differentiation. Participates in T-lymphocyte migration to the infection site by acting as a chemotactic receptor. The sequence is that of C-C chemokine receptor type 5 (CCR5) from Mico humeralifer (Black and white tassel-ear marmoset).